A 184-amino-acid polypeptide reads, in one-letter code: Alpha-tubulin N-acetyltransferase (184 aa).

An N-acetyltransferase domain is found at 1 to 174 (MNIPPEKMHN…NNFVIFAEYF (174 aa)). Residues 108 to 121 (FYIQRNFRKRGLGL) and 144 to 153 (SYKLQSFLKK) contribute to the acetyl-CoA site.

Belongs to the acetyltransferase ATAT1 family.

The enzyme catalyses L-lysyl-[alpha-tubulin] + acetyl-CoA = N(6)-acetyl-L-lysyl-[alpha-tubulin] + CoA + H(+). Functionally, specifically acetylates 'Lys-40' in alpha-tubulin on the lumenal side of microtubules. Promotes microtubule destabilization and accelerates microtubule dynamics; this activity may be independent of acetylation activity. Acetylates alpha-tubulin with a slow enzymatic rate, due to a catalytic site that is not optimized for acetyl transfer. Enters the microtubule through each end and diffuses quickly throughout the lumen of microtubules. Acetylates only long/old microtubules because of its slow acetylation rate since it does not have time to act on dynamically unstable microtubules before the enzyme is released. The polypeptide is Alpha-tubulin N-acetyltransferase (Plasmodium knowlesi (strain H)).